The sequence spans 194 residues: RNA polymerase II subunit A C-terminal domain phosphatase SSU72 like protein 4 (194 aa).

The protein belongs to the SSU72 phosphatase family.

Its subcellular location is the nucleus. The enzyme catalyses O-phospho-L-seryl-[protein] + H2O = L-seryl-[protein] + phosphate. It catalyses the reaction O-phospho-L-threonyl-[protein] + H2O = L-threonyl-[protein] + phosphate. Functionally, protein phosphatase that catalyzes the dephosphorylation of the C-terminal domain of RNA polymerase II. Plays a role in RNA processing and termination. This chain is RNA polymerase II subunit A C-terminal domain phosphatase SSU72 like protein 4, found in Homo sapiens (Human).